The following is a 72-amino-acid chain: MATRDSGGGQQRADRRAEEIDDVATEDTSASDLKERHEKLSEDVDSLLDEIDDVLEENAEEFVKGYVQKGGQ.

Gly residues predominate over residues 1–10 (MATRDSGGGQ). The segment at 1-41 (MATRDSGGGQQRADRRAEEIDDVATEDTSASDLKERHEKLS) is disordered. Residues 27–61 (DTSASDLKERHEKLSEDVDSLLDEIDDVLEENAEE) adopt a coiled-coil conformation. The tract at residues 28–66 (TSASDLKERHEKLSEDVDSLLDEIDDVLEENAEEFVKGY) is ARC ATPase binding. The segment covering 32–41 (DLKERHEKLS) has biased composition (basic and acidic residues). Glutamine 72 carries the post-translational modification Deamidated glutamine. An Isoglutamyl lysine isopeptide (Gln-Lys) (interchain with K-? in acceptor proteins) cross-link involves residue glutamine 72.

The protein belongs to the prokaryotic ubiquitin-like protein family. Strongly interacts with the proteasome-associated ATPase ARC through a hydrophobic interface; the interacting region of Pup lies in its C-terminal half. There is one Pup binding site per ARC hexamer ring. Is modified by deamidation of its C-terminal glutamine to glutamate by the deamidase Dop, a prerequisite to the subsequent pupylation process.

The protein operates within protein degradation; proteasomal Pup-dependent pathway. Its function is as follows. Protein modifier that is covalently attached to lysine residues of substrate proteins, thereby targeting them for proteasomal degradation. The tagging system is termed pupylation. The polypeptide is Prokaryotic ubiquitin-like protein Pup (Frankia casuarinae (strain DSM 45818 / CECT 9043 / HFP020203 / CcI3)).